Reading from the N-terminus, the 373-residue chain is UDP-3-O-acylglucosamine N-acyltransferase 2 (373 aa).

Histidine 257 acts as the Proton acceptor in catalysis. Residues 346-373 (DGRTAASAEAAAPSSDATGVDQPDQAAS) form a disordered region. A compositionally biased stretch (low complexity) spans 350–362 (AASAEAAAPSSDA).

Belongs to the transferase hexapeptide repeat family. LpxD subfamily. As to quaternary structure, homotrimer.

The enzyme catalyses a UDP-3-O-[(3R)-3-hydroxyacyl]-alpha-D-glucosamine + a (3R)-hydroxyacyl-[ACP] = a UDP-2-N,3-O-bis[(3R)-3-hydroxyacyl]-alpha-D-glucosamine + holo-[ACP] + H(+). It functions in the pathway bacterial outer membrane biogenesis; LPS lipid A biosynthesis. Its function is as follows. Catalyzes the N-acylation of UDP-3-O-acylglucosamine using 3-hydroxyacyl-ACP as the acyl donor. Is involved in the biosynthesis of lipid A, a phosphorylated glycolipid that anchors the lipopolysaccharide to the outer membrane of the cell. This chain is UDP-3-O-acylglucosamine N-acyltransferase 2, found in Rhodopseudomonas palustris (strain BisB18).